Reading from the N-terminus, the 95-residue chain is Protein IDA-LIKE 2 (95 aa).

A signal peptide spans Met1–Asn35. The interval Ala75–Pro95 is disordered.

As to expression, expressed in leaves, buds, flowers, seedlings and seeds. Detected at the base of pedicel, in the floral and funicule abscission zones and in vascular tissues.

It is found in the secreted. The protein resides in the extracellular space. Its function is as follows. May be involved in floral abscission. The protein is Protein IDA-LIKE 2 (IDL2) of Arabidopsis thaliana (Mouse-ear cress).